The chain runs to 78 residues: Major outer membrane lipoprotein Lpp (78 aa).

A signal peptide spans methionine 1–glycine 20. Residue cysteine 21 is the site of N-palmitoyl cysteine attachment. Cysteine 21 carries the S-diacylglycerol cysteine lipid modification. Repeats lie at residues threonine 24–isoleucine 34 and asparagine 38–valine 48. Residues valine 27–serine 75 are a coiled coil. Lysine 78 carries the N6-murein peptidoglycan lysine modification.

The protein belongs to the Lpp family. Homotrimer.

Its subcellular location is the cell outer membrane. The protein resides in the secreted. The protein localises to the cell wall. Functionally, a highly abundant outer membrane lipoprotein that controls the distance between the inner and outer membranes. The only protein known to be covalently linked to the peptidoglycan network (PGN). Also non-covalently binds the PGN. The link between the cell outer membrane and PGN contributes to maintenance of the structural and functional integrity of the cell envelope, and maintains the correct distance between the PGN and the outer membrane. The sequence is that of Major outer membrane lipoprotein Lpp from Photorhabdus laumondii subsp. laumondii (strain DSM 15139 / CIP 105565 / TT01) (Photorhabdus luminescens subsp. laumondii).